The sequence spans 351 residues: 1-acylglycerol-3-phosphate O-acyltransferase ABHD5 (351 aa).

An AB hydrolase-1 domain is found at 79 to 184 (PLVLLHGFGG…LILVEPWGFP (106 aa)). Ser-124 is subject to Phosphoserine. The HXXXXD motif motif lies at 329-334 (HYVYAD).

This sequence belongs to the peptidase S33 family. ABHD4/ABHD5 subfamily. As to quaternary structure, interacts with ADRP and PLIN. Interacts with PNPLA2. Interacts with PLIN5; promotes interaction with PNPLA2.

The protein localises to the cytoplasm. It localises to the lipid droplet. The catalysed reaction is a 1-acyl-sn-glycero-3-phosphate + an acyl-CoA = a 1,2-diacyl-sn-glycero-3-phosphate + CoA. The enzyme catalyses 1-(9Z-octadecenoyl)-sn-glycero-3-phosphate + (9Z)-octadecenoyl-CoA = 1,2-di-(9Z-octadecenoyl)-sn-glycero-3-phosphate + CoA. It catalyses the reaction 1-(9Z-octadecenoyl)-sn-glycero-3-phosphate + hexadecanoyl-CoA = 1-(9Z)-octadecenoyl-2-hexadecanoyl-sn-glycero-3-phosphate + CoA. It carries out the reaction 1-(9Z-octadecenoyl)-sn-glycero-3-phosphate + octadecanoyl-CoA = 1-(9Z-octadecenoyl)-2-octadecanoyl-sn-glycero-3-phosphate + CoA. The catalysed reaction is 1-(9Z-octadecenoyl)-sn-glycero-3-phosphate + (5Z,8Z,11Z,14Z)-eicosatetraenoyl-CoA = 1-(9Z)-octadecenoyl-2-(5Z,8Z,11Z,14Z)-eicosatetraenoyl-sn-glycero-3-phosphate + CoA. The enzyme catalyses eicosanoyl-CoA + 1-(9Z-octadecenoyl)-sn-glycero-3-phosphate = 1-(9Z)-octadecenoyl-2-eicosanoyl-sn-glycero-3-phosphate + CoA. It catalyses the reaction 1-hexadecanoyl-sn-glycero-3-phosphate + (9Z)-octadecenoyl-CoA = 1-hexadecanoyl-2-(9Z-octadecenoyl)-sn-glycero-3-phosphate + CoA. It carries out the reaction 1-octadecanoyl-sn-glycero-3-phosphate + (9Z)-octadecenoyl-CoA = 1-octadecanoyl-2-(9Z-octadecenoyl)-sn-glycero-3-phosphate + CoA. The catalysed reaction is 1-(5Z,8Z,11Z,14Z-eicosatetraenoyl)-sn-glycero-3-phosphate + (9Z)-octadecenoyl-CoA = 1-(5Z,8Z,11Z,14Z)-eicosatetraenoyl-2-(9Z)-octadecenoyl-sn-glycero-3-phosphate + CoA. Acyltransferase activity is inhibited by detergents such as Triton X-100 and 3-[(3-cholamidopropyl)dimethylammonio]-1-propanesulfonate (CHAPS). Acyltransferase activity is inhibited by the presence of magnesium and calcium. Functionally, coenzyme A-dependent lysophosphatidic acid acyltransferase that catalyzes the transfer of an acyl group on a lysophosphatidic acid. Functions preferentially with 1-oleoyl-lysophosphatidic acid followed by 1-palmitoyl-lysophosphatidic acid, 1-stearoyl-lysophosphatidic acid and 1-arachidonoyl-lysophosphatidic acid as lipid acceptor. Functions preferentially with arachidonoyl-CoA followed by oleoyl-CoA as acyl group donors. Functions in phosphatidic acid biosynthesis. May regulate the cellular storage of triacylglycerol through activation of the phospholipase PNPLA2. Involved in keratinocyte differentiation. Regulates lipid droplet fusion. The polypeptide is 1-acylglycerol-3-phosphate O-acyltransferase ABHD5 (Rattus norvegicus (Rat)).